The following is a 156-amino-acid chain: Ribosome maturation factor RimP (156 aa).

The protein belongs to the RimP family.

The protein localises to the cytoplasm. Required for maturation of 30S ribosomal subunits. The chain is Ribosome maturation factor RimP from Shouchella clausii (strain KSM-K16) (Alkalihalobacillus clausii).